We begin with the raw amino-acid sequence, 277 residues long: Myelin proteolipid protein (277 aa).

Residues 1 to 10 lie on the Cytoplasmic side of the membrane; sequence MGLLECCARC. 3 S-palmitoyl cysteine lipidation sites follow: Cys-6, Cys-7, and Cys-10. A helical membrane pass occupies residues 11 to 36; it reads LVGAPFASLVATGLCFFGVALFCGCG. At 37–59 the chain is on the extracellular side; the sequence is HEALTGTEKLIETYFSKNYQDYE. The chain crosses the membrane as a helical span at residues 60–88; that stretch reads YLINVIHAFQYVIYGTASFFFLYGALLLA. Topologically, residues 89-151 are cytoplasmic; that stretch reads EGFYTTGAVR…LGKWLGHPDK (63 aa). The S-palmitoyl cysteine moiety is linked to residue Cys-109. Ser-114 bears the Phosphoserine mark. 2 positions are modified to phosphothreonine: Thr-116 and Thr-118. Residues Cys-139 and Cys-141 are each lipidated (S-palmitoyl cysteine). Residues 152 to 178 form a helical membrane-spanning segment; sequence FVGITYALTIVWLLVFACSAVPVYIYF. Topologically, residues 179-238 are extracellular; that stretch reads NTWTTCQSIAFPSKTSASIGSLCADARMYGVLPWNAFPGKVCGSNLLSICKTAEFQMTFH. 2 disulfides stabilise this stretch: Cys-184–Cys-228 and Cys-201–Cys-220. A lipid anchor (O-palmitoyl serine) is attached at Ser-199. Residues 239–268 traverse the membrane as a helical segment; that stretch reads LFIAAFVGAAATLVSLLTFMIAATYNFAVL. The Cytoplasmic portion of the chain corresponds to 269–277; that stretch reads KLMGRGTKF.

This sequence belongs to the myelin proteolipid protein family.

The protein localises to the cell membrane. It localises to the myelin membrane. Its function is as follows. This is the major myelin protein from the central nervous system. It plays an important role in the formation or maintenance of the multilamellar structure of myelin. In Canis lupus familiaris (Dog), this protein is Myelin proteolipid protein (PLP1).